The primary structure comprises 352 residues: Phosphoribosylformylglycinamidine cyclo-ligase (352 aa).

It belongs to the AIR synthase family.

The protein resides in the cytoplasm. It catalyses the reaction 2-formamido-N(1)-(5-O-phospho-beta-D-ribosyl)acetamidine + ATP = 5-amino-1-(5-phospho-beta-D-ribosyl)imidazole + ADP + phosphate + H(+). It functions in the pathway purine metabolism; IMP biosynthesis via de novo pathway; 5-amino-1-(5-phospho-D-ribosyl)imidazole from N(2)-formyl-N(1)-(5-phospho-D-ribosyl)glycinamide: step 2/2. This is Phosphoribosylformylglycinamidine cyclo-ligase from Pseudomonas putida (strain W619).